The sequence spans 54 residues: Protein YojO (54 aa).

The protein belongs to the YojO family.

This Escherichia coli (strain K12) protein is Protein YojO (yojO).